A 79-amino-acid polypeptide reads, in one-letter code: Acyl carrier protein (79 aa).

Residues 6–79 (KEILDGLAEI…VQDVINYIQK (74 aa)) enclose the Carrier domain. O-(pantetheine 4'-phosphoryl)serine is present on Ser41.

Belongs to the acyl carrier protein (ACP) family. In terms of processing, 4'-phosphopantetheine is transferred from CoA to a specific serine of apo-ACP by AcpS. This modification is essential for activity because fatty acids are bound in thioester linkage to the sulfhydryl of the prosthetic group.

It is found in the cytoplasm. It participates in lipid metabolism; fatty acid biosynthesis. In terms of biological role, carrier of the growing fatty acid chain in fatty acid biosynthesis. The chain is Acyl carrier protein from Thermobifida fusca (strain YX).